Reading from the N-terminus, the 658-residue chain is Ubiquilin-3 (658 aa).

Residues 22-96 (IRVTVKTPKD…VHLVIKMQRR (75 aa)) enclose the Ubiquitin-like domain. In terms of domain architecture, STI1 spans 194 to 233 (NPHMQHLIQQNPEIGHILNNPEIMRQTMEFLRNPSMMQEM). Positions 280–291 (TATTASTTTTSS) are enriched in low complexity. Disordered regions lie at residues 280 to 336 (TATT…RNRL) and 362 to 478 (YLQG…PESP). The span at 312–323 (VSGGRQGRGGRQ) shows a compositional bias: gly residues. Polar residues-rich tracts occupy residues 362 to 379 (YLQG…SPLS), 389 to 400 (SSPKSGSGQSLP), and 438 to 469 (TGPS…SLMS). Positions 614 to 658 (QLEAHFRVQLEQLRAMGFLNLEANLQALIATEGDVDAAVEKLRKS) constitute a UBA domain.

In terms of tissue distribution, testis-specific (at protein level).

The sequence is that of Ubiquilin-3 (Ubqln3) from Mus musculus (Mouse).